Here is a 273-residue protein sequence, read N- to C-terminus: MGSGWVPWVVALLVNLTRLDSSMTQGTDSPEDFVIQAKADCYFTNGTEKVQFVVRFIFNLEEYVRFDSDVGMFVALTKLGQPDAEQWNSRLDLLERSRQAVDGVCRHNYRLGAPFTVGRKVQPEVTVYPERTPLLHQHNLLHCSVTGFYPGDIKIRWFLNGQEERARVMSTGPIRNGDWTFQTVVMLEMTPELGHVYTCLVDHSSLLSPVSVEWRAQSEYSWKKMLSGIAAFLLGLIFLLVGIVIQLRAQKGYVRTQMSGNEVSRAVLLPQSC.

The N-terminal stretch at 1-26 (MGSGWVPWVVALLVNLTRLDSSMTQG) is a signal peptide. Positions 27-120 (TDSPEDFVIQ…LGAPFTVGRK (94 aa)) are beta-1. Residues 27-224 (TDSPEDFVIQ…RAQSEYSWKK (198 aa)) are Extracellular-facing. Intrachain disulfides connect Cys-41/Cys-105 and Cys-143/Cys-199. A glycan (N-linked (GlcNAc...) asparagine) is linked at Asn-45. Residues 121–214 (VQPEVTVYPE…SLLSPVSVEW (94 aa)) are beta-2. The region spanning 123–213 (PEVTVYPERT…SSLLSPVSVE (91 aa)) is the Ig-like C1-type domain. The segment at 215 to 224 (RAQSEYSWKK) is connecting peptide. The chain crosses the membrane as a helical span at residues 225–245 (MLSGIAAFLLGLIFLLVGIVI). Residues 246–273 (QLRAQKGYVRTQMSGNEVSRAVLLPQSC) are Cytoplasmic-facing.

The protein belongs to the MHC class II family. As to quaternary structure, heterodimer of an alpha chain (DOA) and a beta chain (DOB). Forms a heterotetrameric complex with an HLA-DM molecule during intracellular transport in endosomal/lysosomal compartments in B-cells.

It localises to the endosome membrane. It is found in the lysosome membrane. Functionally, important modulator in the HLA class II restricted antigen presentation pathway by interaction with the HLA-DM molecule in B-cells. Modifies peptide exchange activity of HLA-DM. This chain is Patr class II histocompatibility antigen, DO beta chain (Patr-DOB), found in Pan troglodytes (Chimpanzee).